A 423-amino-acid chain; its full sequence is N-acylneuraminate cytidylyltransferase B (423 aa).

Substrate-binding residues include arginine 30, asparagine 40, arginine 88, serine 97, serine 99, and glutamine 120. Residue arginine 178 is part of the active site.

This sequence belongs to the CMP-NeuNAc synthase family. In terms of assembly, homotetramer.

The protein localises to the cytoplasm. It carries out the reaction an N-acylneuraminate + CTP = a CMP-N-acyl-beta-neuraminate + diphosphate. Its pathway is amino-sugar metabolism; N-acetylneuraminate metabolism. Functionally, catalyzes the activation of 2-keto-3-deoxy-D-glycero-D-galacto-nononic acid (KDN) to cytidine 5'-monophosphate 2-keto-3-deoxy-D-glycero-D-galacto-nononic acid (CMP-KDN), a substrate required for the addition of sialic acid. Also has weak activity towards N-acetylneuraminic acid (NeuNAc) and N-glycolylneuraminic acid (Neu5Gc). This chain is N-acylneuraminate cytidylyltransferase B, found in Danio rerio (Zebrafish).